A 319-amino-acid chain; its full sequence is MSFSVETKEELARIQPRRRCCQLAELAALFRMDGSLQISGEQGLSLTVSTESASSARKIFRLIKAVFGVQTQILVRRKRRLKKSNVYVISLPARIGGRDVLQEMGITDSQGGFSFEPPSELLKRQCCRRAYLRGAFLGGGSVNSPEGTYHLEIITNDETHARILSELLHRFGLTAKVSQRKGWFIVYLKESEQIVEMLSIIGAHSALLNFENVRIVKGMRNQVNRLVNCETANLNKTVDAALRQTEMIRFVQNRIGFANLPSQLREVAELRLQYPDASLKELGQMLNPPVGKSGVNHRLRRLESLAEAFSRQGGVPRED.

Residues 278–311 (SLKELGQMLNPPVGKSGVNHRLRRLESLAEAFSR) constitute a DNA-binding region (H-T-H motif).

Belongs to the WhiA family.

Its function is as follows. Involved in cell division and chromosome segregation. The sequence is that of Probable cell division protein WhiA from Heliobacterium modesticaldum (strain ATCC 51547 / Ice1).